The primary structure comprises 185 residues: Elongation factor P (185 aa).

It belongs to the elongation factor P family.

The protein localises to the cytoplasm. It participates in protein biosynthesis; polypeptide chain elongation. Its function is as follows. Involved in peptide bond synthesis. Stimulates efficient translation and peptide-bond synthesis on native or reconstituted 70S ribosomes in vitro. Probably functions indirectly by altering the affinity of the ribosome for aminoacyl-tRNA, thus increasing their reactivity as acceptors for peptidyl transferase. In Staphylococcus aureus (strain Mu3 / ATCC 700698), this protein is Elongation factor P.